The chain runs to 246 residues: 1-(5-phosphoribosyl)-5-[(5-phosphoribosylamino)methylideneamino] imidazole-4-carboxamide isomerase (246 aa).

D8 (proton acceptor) is an active-site residue. D131 serves as the catalytic Proton donor.

This sequence belongs to the HisA/HisF family.

Its subcellular location is the cytoplasm. The enzyme catalyses 1-(5-phospho-beta-D-ribosyl)-5-[(5-phospho-beta-D-ribosylamino)methylideneamino]imidazole-4-carboxamide = 5-[(5-phospho-1-deoxy-D-ribulos-1-ylimino)methylamino]-1-(5-phospho-beta-D-ribosyl)imidazole-4-carboxamide. The protein operates within amino-acid biosynthesis; L-histidine biosynthesis; L-histidine from 5-phospho-alpha-D-ribose 1-diphosphate: step 4/9. This Bordetella bronchiseptica (strain ATCC BAA-588 / NCTC 13252 / RB50) (Alcaligenes bronchisepticus) protein is 1-(5-phosphoribosyl)-5-[(5-phosphoribosylamino)methylideneamino] imidazole-4-carboxamide isomerase.